The sequence spans 322 residues: Undecaprenyl-phosphate 4-deoxy-4-formamido-L-arabinose transferase (322 aa).

The Cytoplasmic segment spans residues 1-235 (MFEIHPVKKV…TCLTTTPLRM (235 aa)). A helical transmembrane segment spans residues 236-256 (LSLLGSIIAIGGFSIAVLLVI). Residues 257–269 (LRLTFGPQWAAEG) are Periplasmic-facing. A helical membrane pass occupies residues 270–290 (VFMLFAVLFTFIGAQFIGMGL). At 291-322 (LGEYIGRIYTDVRARPRYFVQQVIRPSSKENE) the chain is on the cytoplasmic side.

This sequence belongs to the glycosyltransferase 2 family.

The protein resides in the cell inner membrane. It carries out the reaction UDP-4-deoxy-4-formamido-beta-L-arabinose + di-trans,octa-cis-undecaprenyl phosphate = 4-deoxy-4-formamido-alpha-L-arabinopyranosyl di-trans,octa-cis-undecaprenyl phosphate + UDP. It functions in the pathway glycolipid biosynthesis; 4-amino-4-deoxy-alpha-L-arabinose undecaprenyl phosphate biosynthesis; 4-amino-4-deoxy-alpha-L-arabinose undecaprenyl phosphate from UDP-4-deoxy-4-formamido-beta-L-arabinose and undecaprenyl phosphate: step 1/2. Its pathway is bacterial outer membrane biogenesis; lipopolysaccharide biosynthesis. Catalyzes the transfer of 4-deoxy-4-formamido-L-arabinose from UDP to undecaprenyl phosphate. The modified arabinose is attached to lipid A and is required for resistance to polymyxin and cationic antimicrobial peptides. This is Undecaprenyl-phosphate 4-deoxy-4-formamido-L-arabinose transferase from Escherichia coli O45:K1 (strain S88 / ExPEC).